Here is an 83-residue protein sequence, read N- to C-terminus: Small ribosomal subunit protein eS21 (83 aa).

It belongs to the eukaryotic ribosomal protein eS21 family. Component of the 40S small ribosomal subunit. Interacts with sta.

The protein resides in the cytoplasm. Its subcellular location is the cytosol. It localises to the rough endoplasmic reticulum. May be an associated component of the ribosome rather than a core structural subunit. May act as a translation initiation factor. Has a role in regulation of cell proliferation in the hematopoietic organs and the imaginal disks of larva. This is Small ribosomal subunit protein eS21 (RpS21) from Drosophila ananassae (Fruit fly).